We begin with the raw amino-acid sequence, 854 residues long: Translation initiation factor IF-2 (854 aa).

Positions 61–72 (KNIKTPTAKKPK) are enriched in basic residues. Disordered stretches follow at residues 61–115 (KNIK…LASA) and 167–186 (ESLK…KKES). Residues 73 to 108 (KENAKDQEKLNESEKKEPKKEESKEQEKQEIIDTHK) show a composition bias toward basic and acidic residues. In terms of domain architecture, tr-type G spans 353–520 (TRAPVITIMG…IVLLQADILE (168 aa)). Positions 362–369 (GHVDHGKT) are G1. Residue 362 to 369 (GHVDHGKT) participates in GTP binding. Positions 387–391 (GITQH) are G2. The tract at residues 408-411 (DTPG) is G3. GTP is bound by residues 408–412 (DTPGH) and 462–465 (NKMD). The segment at 462–465 (NKMD) is G4. The G5 stretch occupies residues 498–500 (SAK).

It belongs to the TRAFAC class translation factor GTPase superfamily. Classic translation factor GTPase family. IF-2 subfamily.

It is found in the cytoplasm. Its function is as follows. One of the essential components for the initiation of protein synthesis. Protects formylmethionyl-tRNA from spontaneous hydrolysis and promotes its binding to the 30S ribosomal subunits. Also involved in the hydrolysis of GTP during the formation of the 70S ribosomal complex. The protein is Translation initiation factor IF-2 of Campylobacter jejuni subsp. doylei (strain ATCC BAA-1458 / RM4099 / 269.97).